The primary structure comprises 551 residues: Glucans biosynthesis protein D (551 aa).

Positions 1-32 form a signal peptide, tat-type signal; the sequence is MNRRRFLQGSLAMAALSGTTGLSTLFSRAAFA.

The protein belongs to the OpgD/OpgG family. In terms of processing, predicted to be exported by the Tat system. The position of the signal peptide cleavage has not been experimentally proven.

The protein localises to the periplasm. Its pathway is glycan metabolism; osmoregulated periplasmic glucan (OPG) biosynthesis. Functionally, probably involved in the control of the structural glucose backbone of osmoregulated periplasmic glucans (OPGs). The protein is Glucans biosynthesis protein D of Enterobacter sp. (strain 638).